Consider the following 920-residue polypeptide: Phosphoenolpyruvate carboxylase (920 aa).

Residues histidine 138 and lysine 583 contribute to the active site.

Belongs to the PEPCase type 1 family. Mg(2+) serves as cofactor.

The enzyme catalyses oxaloacetate + phosphate = phosphoenolpyruvate + hydrogencarbonate. Forms oxaloacetate, a four-carbon dicarboxylic acid source for the tricarboxylic acid cycle. This chain is Phosphoenolpyruvate carboxylase, found in Streptococcus pyogenes serotype M3 (strain ATCC BAA-595 / MGAS315).